Here is a 265-residue protein sequence, read N- to C-terminus: Glutamate racemase (265 aa).

Substrate is bound by residues 9–10 (DS) and 41–42 (YS). Residue cysteine 73 is the Proton donor/acceptor of the active site. Position 74–75 (74–75 (NT)) interacts with substrate. Cysteine 184 acts as the Proton donor/acceptor in catalysis. Residue 185-186 (TH) coordinates substrate.

This sequence belongs to the aspartate/glutamate racemases family.

It catalyses the reaction L-glutamate = D-glutamate. It functions in the pathway cell wall biogenesis; peptidoglycan biosynthesis. In terms of biological role, provides the (R)-glutamate required for cell wall biosynthesis. The protein is Glutamate racemase of Actinobacillus pleuropneumoniae serotype 5b (strain L20).